Reading from the N-terminus, the 967-residue chain is Putative helicase MOV-10 (967 aa).

Residues 85-117 are disordered; sequence ADQYRRPRTDTEVSAPAPGQQPSSGPPAPQSRA. Over residues 98 to 107 the composition is skewed to low complexity; that stretch reads SAPAPGQQPS. ATP is bound at residue 516–523; the sequence is GPPGTGKT. Residues 638–641 carry the DEAG box motif; it reads DECG.

Belongs to the DNA2/NAM7 helicase family. SDE3 subfamily.

It is found in the cytoplasm. The protein resides in the P-body. Its subcellular location is the cytoplasmic ribonucleoprotein granule. The protein localises to the stress granule. It localises to the nucleus. It catalyses the reaction ATP + H2O = ADP + phosphate + H(+). In terms of biological role, 5' to 3' RNA helicase that is involved in a number of cellular roles ranging from mRNA metabolism and translation, modulation of viral infectivity, inhibition of retrotransposition, or regulation of synaptic transmission. Plays an important role in innate antiviral immunity by promoting type I interferon production. Required for microRNA (miRNA)-mediated gene silencing by the RNA-induced silencing complex (RISC). Required for both miRNA-mediated translational repression and miRNA-mediated cleavage of complementary mRNAs by RISC. In cooperation with FMR1, regulates miRNA-mediated translational repression by AGO2. Restricts retrotransposition of long interspersed element-1 (LINE-1). Required for embryonic viability and for normal central nervous system development and function. May function as a messenger ribonucleoprotein (mRNP) clearance factor. This Gallus gallus (Chicken) protein is Putative helicase MOV-10 (MOV10).